The following is a 251-amino-acid chain: Ribonuclease PH (251 aa).

Residues R87 and 125–127 (GTR) each bind phosphate.

This sequence belongs to the RNase PH family. In terms of assembly, homohexameric ring arranged as a trimer of dimers.

The catalysed reaction is tRNA(n+1) + phosphate = tRNA(n) + a ribonucleoside 5'-diphosphate. Functionally, phosphorolytic 3'-5' exoribonuclease that plays an important role in tRNA 3'-end maturation. Removes nucleotide residues following the 3'-CCA terminus of tRNAs; can also add nucleotides to the ends of RNA molecules by using nucleoside diphosphates as substrates, but this may not be physiologically important. Probably plays a role in initiation of 16S rRNA degradation (leading to ribosome degradation) during starvation. The polypeptide is Ribonuclease PH (Saccharopolyspora erythraea (strain ATCC 11635 / DSM 40517 / JCM 4748 / NBRC 13426 / NCIMB 8594 / NRRL 2338)).